Here is a 530-residue protein sequence, read N- to C-terminus: Hyccin 2 (530 aa).

A phosphothreonine mark is found at threonine 30 and threonine 306. Serine 321 and serine 341 each carry phosphoserine. Positions 328 to 404 (RREGAEGLNG…SNESPRDSVV (77 aa)) are disordered. Positions 353–373 (SGASLSSQPHGTKPPSSSQRG) are enriched in polar residues. 4 positions are modified to phosphoserine: serine 430, serine 442, serine 444, and serine 491. Positions 502 to 530 (EGKELLSPGAPLTKQSRSPSFNMQLISQV) are disordered. The span at 514–530 (TKQSRSPSFNMQLISQV) shows a compositional bias: polar residues.

The protein belongs to the Hyccin family. As to quaternary structure, component of a phosphatidylinositol 4-kinase (PI4K) complex, composed of PI4KA, EFR3 (EFR3A or EFR3B), TTC7 (TTC7A or TTC7B) and HYCC (HYCC1 or HYCC2). In terms of tissue distribution, expressed in the central nervous system. Expressed at much lower level in oligodendrocytes than in neurons.

The protein resides in the cytoplasm. It localises to the cytosol. Its subcellular location is the cell membrane. Functionally, component of a complex required to localize phosphatidylinositol 4-kinase (PI4K) to the plasma membrane. The protein is Hyccin 2 (Hycc2) of Mus musculus (Mouse).